The chain runs to 181 residues: Probable cobalt-precorrin-6B C(15)-methyltransferase (decarboxylating) (181 aa).

S-adenosyl-L-methionine-binding positions include Thr-16, Gly-40–Gly-44, Asp-61, and Ala-89.

This sequence belongs to the methyltransferase superfamily. Archaeal-type CbiT family.

It carries out the reaction Co-precorrin-6B + S-adenosyl-L-methionine = Co-precorrin-7 + S-adenosyl-L-homocysteine + CO2. Its pathway is cofactor biosynthesis; adenosylcobalamin biosynthesis; cob(II)yrinate a,c-diamide from sirohydrochlorin (anaerobic route): step 8/10. In terms of biological role, catalyzes the methylation of C-15 in cobalt-precorrin-6B followed by the decarboxylation of C-12 to form cobalt-precorrin-7. The polypeptide is Probable cobalt-precorrin-6B C(15)-methyltransferase (decarboxylating) (Methanococcus maripaludis (strain C7 / ATCC BAA-1331)).